A 209-amino-acid polypeptide reads, in one-letter code: T-cell surface glycoprotein CD8 beta chain (209 aa).

The first 21 residues, 1 to 21 (MRPRMWLLLSAQLAALHGNSV), serve as a signal peptide directing secretion. The Ig-like V-type domain maps to 22 to 131 (LQQTPAYIMV…TLIFGTGTQL (110 aa)). Residues 22-169 (LQQTPAYIMV…ETRKGPLCSP (148 aa)) lie on the Extracellular side of the membrane. A disulfide bridge connects residues Cys41 and Cys115. An N-linked (GlcNAc...) asparagine glycan is attached at Asn101. A helical membrane pass occupies residues 170–190 (ITLSLLVAGILVLLVSLGVAI). Residues 191–209 (HLYCRQRRARLRFMKQFYK) lie on the Cytoplasmic side of the membrane.

In terms of assembly, forms disulfide-linked heterodimers with CD8A at the cell surface. Interacts with CD3D; this interaction couples TCR-CD3 with CD8. Interacts with LCK. Post-translationally, phosphorylated as a consequence of T-cell activation. Palmitoylated at the cytoplasmic tail and thereby targets the heterodimer CD8A/CD8B to lipid rafts unlike CD8A homodimers.

The protein resides in the cell membrane. Functionally, integral membrane glycoprotein that plays an essential role in the immune response and serves multiple functions in responses against both external and internal offenses. In T-cells, functions primarily as a coreceptor for MHC class I molecule:peptide complex. The antigens presented by class I peptides are derived from cytosolic proteins while class II derived from extracellular proteins. Interacts simultaneously with the T-cell receptor (TCR) and the MHC class I proteins presented by antigen presenting cells (APCs). In turn, recruits the Src kinase LCK to the vicinity of the TCR-CD3 complex. A palmitoylation site in the cytoplasmic tail of CD8B chain contributes to partitioning of CD8 into the plasma membrane lipid rafts where signaling proteins are enriched. Once LCK recruited, it initiates different intracellular signaling pathways by phosphorylating various substrates ultimately leading to lymphokine production, motility, adhesion and activation of cytotoxic T-lymphocytes (CTLs). Additionally, plays a critical role in thymic selection of CD8+ T-cells. The protein is T-cell surface glycoprotein CD8 beta chain (CD8B) of Saimiri sciureus (Common squirrel monkey).